The following is a 143-amino-acid chain: Large ribosomal subunit protein uL16 (143 aa).

It belongs to the universal ribosomal protein uL16 family. In terms of assembly, part of the 50S ribosomal subunit.

In terms of biological role, binds 23S rRNA and is also seen to make contacts with the A and possibly P site tRNAs. This chain is Large ribosomal subunit protein uL16, found in Sphingopyxis alaskensis (strain DSM 13593 / LMG 18877 / RB2256) (Sphingomonas alaskensis).